The primary structure comprises 182 residues: ATP synthase subunit delta (182 aa).

The protein belongs to the ATPase delta chain family. F-type ATPases have 2 components, F(1) - the catalytic core - and F(0) - the membrane proton channel. F(1) has five subunits: alpha(3), beta(3), gamma(1), delta(1), epsilon(1). F(0) has three main subunits: a(1), b(2) and c(10-14). The alpha and beta chains form an alternating ring which encloses part of the gamma chain. F(1) is attached to F(0) by a central stalk formed by the gamma and epsilon chains, while a peripheral stalk is formed by the delta and b chains.

Its subcellular location is the cell inner membrane. In terms of biological role, f(1)F(0) ATP synthase produces ATP from ADP in the presence of a proton or sodium gradient. F-type ATPases consist of two structural domains, F(1) containing the extramembraneous catalytic core and F(0) containing the membrane proton channel, linked together by a central stalk and a peripheral stalk. During catalysis, ATP synthesis in the catalytic domain of F(1) is coupled via a rotary mechanism of the central stalk subunits to proton translocation. Its function is as follows. This protein is part of the stalk that links CF(0) to CF(1). It either transmits conformational changes from CF(0) to CF(1) or is implicated in proton conduction. The polypeptide is ATP synthase subunit delta (Pseudothermotoga lettingae (strain ATCC BAA-301 / DSM 14385 / NBRC 107922 / TMO) (Thermotoga lettingae)).